Consider the following 297-residue polypeptide: HTH-type transcriptional regulator ArgP (297 aa).

The HTH lysR-type domain occupies 4 to 60; it reads PDYRTLQALDAVIRERGFERAAQKLCITQSAVSQRIKQLENLFGQPLLVRTVPPRPT. A DNA-binding region (H-T-H motif) is located at residues 21 to 40; it reads FERAAQKLCITQSAVSQRIK.

Belongs to the LysR transcriptional regulatory family. In terms of assembly, homodimer.

In terms of biological role, controls the transcription of genes involved in arginine and lysine metabolism. In Yersinia enterocolitica serotype O:8 / biotype 1B (strain NCTC 13174 / 8081), this protein is HTH-type transcriptional regulator ArgP.